Here is a 140-residue protein sequence, read N- to C-terminus: ATP synthase epsilon chain (140 aa).

It belongs to the ATPase epsilon chain family. As to quaternary structure, F-type ATPases have 2 components, CF(1) - the catalytic core - and CF(0) - the membrane proton channel. CF(1) has five subunits: alpha(3), beta(3), gamma(1), delta(1), epsilon(1). CF(0) has three main subunits: a, b and c.

It localises to the cell inner membrane. Produces ATP from ADP in the presence of a proton gradient across the membrane. In Pseudoalteromonas translucida (strain TAC 125), this protein is ATP synthase epsilon chain.